Here is a 237-residue protein sequence, read N- to C-terminus: Class B acid phosphatase (237 aa).

The N-terminal stretch at 1-23 (MRKVTLVFSAIAFAFSLNGVVQA) is a signal peptide. The active-site Nucleophile is Asp-69. Mg(2+) contacts are provided by Asp-69 and Asp-71. The Proton donor role is filled by Asp-71. Substrate is bound by residues 137–138 (TG) and Lys-177. Asp-192 serves as a coordination point for Mg(2+).

It belongs to the class B bacterial acid phosphatase family. Homotetramer. It depends on Mg(2+) as a cofactor.

The protein localises to the periplasm. The enzyme catalyses a phosphate monoester + H2O = an alcohol + phosphate. In terms of biological role, dephosphorylates several organic phosphate monoesters. Also has a phosphotransferase activity catalyzing the transfer of low-energy phosphate groups from organic phosphate monoesters to free hydroxyl groups of various organic compounds. The protein is Class B acid phosphatase of Xenorhabdus bovienii (strain SS-2004) (Xenorhabdus nematophila subsp. bovienii).